The chain runs to 178 residues: ATP synthase subunit delta (178 aa).

The protein belongs to the ATPase delta chain family. In terms of assembly, F-type ATPases have 2 components, F(1) - the catalytic core - and F(0) - the membrane proton channel. F(1) has five subunits: alpha(3), beta(3), gamma(1), delta(1), epsilon(1). F(0) has three main subunits: a(1), b(2) and c(10-14). The alpha and beta chains form an alternating ring which encloses part of the gamma chain. F(1) is attached to F(0) by a central stalk formed by the gamma and epsilon chains, while a peripheral stalk is formed by the delta and b chains.

It is found in the cell inner membrane. In terms of biological role, f(1)F(0) ATP synthase produces ATP from ADP in the presence of a proton or sodium gradient. F-type ATPases consist of two structural domains, F(1) containing the extramembraneous catalytic core and F(0) containing the membrane proton channel, linked together by a central stalk and a peripheral stalk. During catalysis, ATP synthesis in the catalytic domain of F(1) is coupled via a rotary mechanism of the central stalk subunits to proton translocation. Its function is as follows. This protein is part of the stalk that links CF(0) to CF(1). It either transmits conformational changes from CF(0) to CF(1) or is implicated in proton conduction. In Cellvibrio japonicus (strain Ueda107) (Pseudomonas fluorescens subsp. cellulosa), this protein is ATP synthase subunit delta.